The chain runs to 975 residues: Glycine dehydrogenase (decarboxylating) (975 aa).

Lys723 carries the post-translational modification N6-(pyridoxal phosphate)lysine.

It belongs to the GcvP family. In terms of assembly, the glycine cleavage system is composed of four proteins: P, T, L and H. The cofactor is pyridoxal 5'-phosphate.

The catalysed reaction is N(6)-[(R)-lipoyl]-L-lysyl-[glycine-cleavage complex H protein] + glycine + H(+) = N(6)-[(R)-S(8)-aminomethyldihydrolipoyl]-L-lysyl-[glycine-cleavage complex H protein] + CO2. In terms of biological role, the glycine cleavage system catalyzes the degradation of glycine. The P protein binds the alpha-amino group of glycine through its pyridoxal phosphate cofactor; CO(2) is released and the remaining methylamine moiety is then transferred to the lipoamide cofactor of the H protein. This chain is Glycine dehydrogenase (decarboxylating), found in Burkholderia mallei (strain NCTC 10247).